Reading from the N-terminus, the 388-residue chain is Succinate--CoA ligase [ADP-forming] subunit beta (388 aa).

One can recognise an ATP-grasp domain in the interval 9–244; it reads KQLFAEYGLP…PSQDDPREAH (236 aa). ATP contacts are provided by residues lysine 46, 53-55, glutamate 99, threonine 102, and glutamate 107; that span reads GRG. Residues asparagine 199 and aspartate 213 each coordinate Mg(2+). Substrate is bound by residues asparagine 264 and 321 to 323; that span reads GIV.

It belongs to the succinate/malate CoA ligase beta subunit family. In terms of assembly, heterotetramer of two alpha and two beta subunits. The cofactor is Mg(2+).

It carries out the reaction succinate + ATP + CoA = succinyl-CoA + ADP + phosphate. The enzyme catalyses GTP + succinate + CoA = succinyl-CoA + GDP + phosphate. Its pathway is carbohydrate metabolism; tricarboxylic acid cycle; succinate from succinyl-CoA (ligase route): step 1/1. Its function is as follows. Succinyl-CoA synthetase functions in the citric acid cycle (TCA), coupling the hydrolysis of succinyl-CoA to the synthesis of either ATP or GTP and thus represents the only step of substrate-level phosphorylation in the TCA. The beta subunit provides nucleotide specificity of the enzyme and binds the substrate succinate, while the binding sites for coenzyme A and phosphate are found in the alpha subunit. This Pseudomonas fluorescens (strain ATCC BAA-477 / NRRL B-23932 / Pf-5) protein is Succinate--CoA ligase [ADP-forming] subunit beta.